The following is a 167-amino-acid chain: Leukotoxin-activating lysine-acyltransferase LktC serotype A11 (167 aa).

Catalysis depends on residues H22 and D91.

Belongs to the RTX toxin acyltransferase family.

It localises to the cytoplasm. The catalysed reaction is a fatty acyl-[ACP] + L-lysyl-[protein] = N(6)-(fatty acyl)-L-lysyl-[protein] + holo-[ACP] + H(+). Functionally, involved in fatty acylation of the protoxin (LktA) at two internal lysine residues, thereby converting it to the active toxin. The sequence is that of Leukotoxin-activating lysine-acyltransferase LktC serotype A11 (lktC) from Mannheimia haemolytica (Pasteurella haemolytica).